The following is a 184-amino-acid chain: Mitochondrial import inner membrane translocase subunit TIM22 (184 aa).

Positions 1-26 (MSLWGVYTGPQPPKKPLQEMTQEEQA) are disordered. 2 cysteine pairs are disulfide-bonded: Cys40–Cys118 and Cys137–Cys156. 2 helical membrane passes run 45-65 (VMAG…MASM) and 151-171 (AALV…MYLN).

This sequence belongs to the Tim17/Tim22/Tim23 family. Component of the TIM22 complex, whose core is composed of TIM22 and TIM54, associated with the 70 kDa heterohexamer composed of TIM9 and TIM10 (or TIM8 and TIM13).

The protein localises to the mitochondrion inner membrane. Essential core component of the TIM22 complex, a complex that mediates the import and insertion of multi-pass transmembrane proteins into the mitochondrial inner membrane. In the TIM22 complex, it constitutes the voltage-activated and signal-gated channel. Forms a twin-pore translocase that uses the membrane potential as external driving force in 2 voltage-dependent steps. This chain is Mitochondrial import inner membrane translocase subunit TIM22, found in Candida albicans (strain SC5314 / ATCC MYA-2876) (Yeast).